Here is a 208-residue protein sequence, read N- to C-terminus: Uracil phosphoribosyltransferase (208 aa).

5-phospho-alpha-D-ribose 1-diphosphate is bound by residues arginine 78, arginine 103, and 130–138; that span reads DPMLATGGS. Residues isoleucine 193 and 198–200 contribute to the uracil site; that span reads GDA. A 5-phospho-alpha-D-ribose 1-diphosphate-binding site is contributed by aspartate 199.

The protein belongs to the UPRTase family. Requires Mg(2+) as cofactor.

It catalyses the reaction UMP + diphosphate = 5-phospho-alpha-D-ribose 1-diphosphate + uracil. Its pathway is pyrimidine metabolism; UMP biosynthesis via salvage pathway; UMP from uracil: step 1/1. Allosterically activated by GTP. In terms of biological role, catalyzes the conversion of uracil and 5-phospho-alpha-D-ribose 1-diphosphate (PRPP) to UMP and diphosphate. The sequence is that of Uracil phosphoribosyltransferase from Thermus thermophilus (strain ATCC 27634 / DSM 579 / HB8).